A 284-amino-acid chain; its full sequence is Adenylate kinase 1, chloroplastic (284 aa).

The N-terminal 36 residues, 1-36 (MARLVRVARSSSLFGFGNRFYSTSAEASHASSPSPF), are a transit peptide targeting the chloroplast. 61-66 (GVGKGT) is a binding site for ATP. Residues 81–110 (ATGDLVREELASSGPLSQKLSEIVNQGKLV) are NMP. AMP contacts are provided by residues Thr-82, Arg-87, 108-110 (KLV), 138-141 (GFPR), and Gln-145. The interval 174-222 (GRRTCSQCGKGFNVAHINLKGENGRPGISMDPLLPPHQCMSKLVTRADD) is LID. Position 175 (Arg-175) interacts with ATP. 2 residues coordinate AMP: Arg-219 and Arg-230. Gly-258 provides a ligand contact to ATP.

The protein belongs to the adenylate kinase family. In terms of assembly, monomer. In terms of tissue distribution, highly expressed in flowers and at lower levels in roots, leaves and stems.

It localises to the plastid. The protein resides in the chloroplast stroma. The enzyme catalyses AMP + ATP = 2 ADP. In terms of biological role, catalyzes the reversible transfer of the terminal phosphate group between ATP and AMP. Plays an important role in cellular energy homeostasis, adenine nucleotide metabolism and plant growth. The polypeptide is Adenylate kinase 1, chloroplastic (ADK) (Arabidopsis thaliana (Mouse-ear cress)).